Reading from the N-terminus, the 860-residue chain is Leucine--tRNA ligase (860 aa).

The short motif at 42 to 52 (PYPSGRLHMGH) is the 'HIGH' region element. The short motif at 619–623 (KMSKS) is the 'KMSKS' region element. Lys622 is an ATP binding site.

It belongs to the class-I aminoacyl-tRNA synthetase family.

The protein localises to the cytoplasm. The enzyme catalyses tRNA(Leu) + L-leucine + ATP = L-leucyl-tRNA(Leu) + AMP + diphosphate. In Pectobacterium atrosepticum (strain SCRI 1043 / ATCC BAA-672) (Erwinia carotovora subsp. atroseptica), this protein is Leucine--tRNA ligase.